The chain runs to 126 residues: Ribosome-binding factor A (126 aa).

Belongs to the RbfA family. Monomer. Binds 30S ribosomal subunits, but not 50S ribosomal subunits or 70S ribosomes.

The protein resides in the cytoplasm. Its function is as follows. One of several proteins that assist in the late maturation steps of the functional core of the 30S ribosomal subunit. Associates with free 30S ribosomal subunits (but not with 30S subunits that are part of 70S ribosomes or polysomes). Required for efficient processing of 16S rRNA. May interact with the 5'-terminal helix region of 16S rRNA. The chain is Ribosome-binding factor A from Histophilus somni (strain 129Pt) (Haemophilus somnus).